The chain runs to 449 residues: Exodeoxyribonuclease 7 large subunit (449 aa).

The protein belongs to the XseA family. Heterooligomer composed of large and small subunits.

It localises to the cytoplasm. The enzyme catalyses Exonucleolytic cleavage in either 5'- to 3'- or 3'- to 5'-direction to yield nucleoside 5'-phosphates.. Functionally, bidirectionally degrades single-stranded DNA into large acid-insoluble oligonucleotides, which are then degraded further into small acid-soluble oligonucleotides. This is Exodeoxyribonuclease 7 large subunit from Aliivibrio fischeri (strain ATCC 700601 / ES114) (Vibrio fischeri).